The chain runs to 446 residues: Argininosuccinate lyase (446 aa).

The protein belongs to the lyase 1 family. Argininosuccinate lyase subfamily.

The protein resides in the cytoplasm. The enzyme catalyses 2-(N(omega)-L-arginino)succinate = fumarate + L-arginine. The protein operates within amino-acid biosynthesis; L-arginine biosynthesis; L-arginine from L-ornithine and carbamoyl phosphate: step 3/3. This is Argininosuccinate lyase from Bacteroides thetaiotaomicron (strain ATCC 29148 / DSM 2079 / JCM 5827 / CCUG 10774 / NCTC 10582 / VPI-5482 / E50).